The following is a 475-amino-acid chain: Aspartyl/glutamyl-tRNA(Asn/Gln) amidotransferase subunit B (475 aa).

The protein belongs to the GatB/GatE family. GatB subfamily. As to quaternary structure, heterotrimer of A, B and C subunits.

It catalyses the reaction L-glutamyl-tRNA(Gln) + L-glutamine + ATP + H2O = L-glutaminyl-tRNA(Gln) + L-glutamate + ADP + phosphate + H(+). The catalysed reaction is L-aspartyl-tRNA(Asn) + L-glutamine + ATP + H2O = L-asparaginyl-tRNA(Asn) + L-glutamate + ADP + phosphate + 2 H(+). Its function is as follows. Allows the formation of correctly charged Asn-tRNA(Asn) or Gln-tRNA(Gln) through the transamidation of misacylated Asp-tRNA(Asn) or Glu-tRNA(Gln) in organisms which lack either or both of asparaginyl-tRNA or glutaminyl-tRNA synthetases. The reaction takes place in the presence of glutamine and ATP through an activated phospho-Asp-tRNA(Asn) or phospho-Glu-tRNA(Gln). This is Aspartyl/glutamyl-tRNA(Asn/Gln) amidotransferase subunit B from Bacillus thuringiensis subsp. konkukian (strain 97-27).